The primary structure comprises 216 residues: Dimethylamine corrinoid protein 2 (216 aa).

One can recognise a B12-binding N-terminal domain in the interval 1-91 (MASKEELLQE…EMPAGTETKK (91 aa)). Residues 92-216 (LGVIVNGTVE…AKAKELLLGK (125 aa)) form the B12-binding domain. Residue H105 participates in methylcob(III)alamin binding.

This sequence belongs to the methylamine corrinoid protein family.

It participates in one-carbon metabolism; methanogenesis from dimethylamine. Functionally, acts as a methyl group carrier between MtbB and MtbA. The chain is Dimethylamine corrinoid protein 2 (mtbC2) from Methanosarcina acetivorans (strain ATCC 35395 / DSM 2834 / JCM 12185 / C2A).